Here is a 212-residue protein sequence, read N- to C-terminus: Putative 3-methyladenine DNA glycosylase (212 aa).

The protein belongs to the DNA glycosylase MPG family.

The polypeptide is Putative 3-methyladenine DNA glycosylase (Frankia casuarinae (strain DSM 45818 / CECT 9043 / HFP020203 / CcI3)).